A 585-amino-acid polypeptide reads, in one-letter code: Arginine--tRNA ligase (585 aa).

The 'HIGH' region signature appears at 131–141; sequence ANPTGPMHVGH.

It belongs to the class-I aminoacyl-tRNA synthetase family. In terms of assembly, monomer.

Its subcellular location is the cytoplasm. It catalyses the reaction tRNA(Arg) + L-arginine + ATP = L-arginyl-tRNA(Arg) + AMP + diphosphate. The chain is Arginine--tRNA ligase from Rhizobium leguminosarum bv. trifolii (strain WSM2304).